The following is a 256-amino-acid chain: Hydroxyethylthiazole kinase (256 aa).

Substrate is bound at residue Met-38. The ATP site is built by Arg-114 and Thr-159. Gly-186 contributes to the substrate binding site.

Belongs to the Thz kinase family. Requires Mg(2+) as cofactor.

The catalysed reaction is 5-(2-hydroxyethyl)-4-methylthiazole + ATP = 4-methyl-5-(2-phosphooxyethyl)-thiazole + ADP + H(+). Its pathway is cofactor biosynthesis; thiamine diphosphate biosynthesis; 4-methyl-5-(2-phosphoethyl)-thiazole from 5-(2-hydroxyethyl)-4-methylthiazole: step 1/1. In terms of biological role, catalyzes the phosphorylation of the hydroxyl group of 4-methyl-5-beta-hydroxyethylthiazole (THZ). This Streptococcus agalactiae serotype Ia (strain ATCC 27591 / A909 / CDC SS700) protein is Hydroxyethylthiazole kinase.